Here is a 496-residue protein sequence, read N- to C-terminus: Sodium/sialic acid symporter SiaT (496 aa).

Residues 1-7 (MQLHDFG) lie on the Periplasmic side of the membrane. A helical transmembrane segment spans residues 8–29 (FINYAVLFGYLAAMLLVGVYFS). Topologically, residues 30-46 (KRQKTADDYFRGGGRVP) are cytoplasmic. Residues 47-59 (GWAAGVSVFATTL) traverse the membrane as a helical segment. Ala56 contacts Na(+). Thr58 is a binding site for N-acetyl-alpha-neuraminate. Leu59 serves as a coordination point for Na(+). 3 residues coordinate N-acetyl-alpha-neuraminate: Ser60, Thr63, and Gln82. The Periplasmic segment spans residues 60-76 (SSITFMSIPAKAYTSDW). A helical membrane pass occupies residues 77–92 (TFIIGQYLAIAILPLV). The Cytoplasmic portion of the chain corresponds to 93–116 (FYFYIPFFRKLKITSAYEYLEARF). A helical membrane pass occupies residues 117-144 (DVRSRLFASLSFMLFHIGRVAIITYLTV). Residue Arg135 participates in N-acetyl-alpha-neuraminate binding. At 145-154 (LALRPFMGID) the chain is on the periplasmic side. Residues 155-172 (PVVLIVLISLLCIIYTWM) traverse the membrane as a helical segment. At 173–174 (GG) the chain is on the cytoplasmic side. The helical transmembrane segment at 175-199 (IEGVIWTDVIQGLLLSGGAVLIFIM) threads the bilayer. Na(+) is bound at residue Asp182. Topologically, residues 200–235 (ICFKVDGGISEIFTTTAQADKFFPTTQWRWSWTDST) are periplasmic. The chain crosses the membrane as a helical span at residues 236–252 (IPVLMIGFLFANIQQFT). The Cytoplasmic segment spans residues 253 to 272 (ASQDVVQRYIVTDSIKETKR). The chain crosses the membrane as a helical span at residues 273–292 (TLITNAKLVAIIPIFFFAIG). Residues 293–325 (SALFVYYQQNPSLLPAGFNTGGILPLFIVTEMP) lie on the Periplasmic side of the membrane. Residues 326-356 (IGIAGLIIAAIFAAAQSSISSSLNSISSCFN) traverse the membrane as a helical segment. Residues Ala339, Ser342, Ser343, Ser345, and Ser346 each coordinate Na(+). Residues 357-374 (SDIYTRLSKSSPSPEQKM) lie on the Cytoplasmic side of the membrane. A helical membrane pass occupies residues 375–396 (KVAKLVIIVAGIFSSLAAIWLV). Topologically, residues 397–403 (LSDEAEI) are periplasmic. A helical membrane pass occupies residues 404–427 (WDAFNSLIGLMGGPMTGLFMLGIF). Residues 428 to 432 (VKRAN) are Cytoplasmic-facing. A helical transmembrane segment spans residues 433–453 (AGSAVVGIIVSIIAVLAARYG). At 454-457 (SDLN) the chain is on the periplasmic side. Residues 458–479 (FFFYGVIGSMSVVIAGTITAPL) traverse the membrane as a helical segment. Residues 480-496 (FAPAKQLSLDDSETSEN) are Cytoplasmic-facing.

The protein belongs to the sodium:solute symporter (SSF) (TC 2.A.21) family.

The protein resides in the cell inner membrane. The catalysed reaction is N-acetyl-alpha-neuraminate(out) + 2 Na(+)(out) = N-acetyl-alpha-neuraminate(in) + 2 Na(+)(in). Its activity is regulated as follows. Both Na(+) sites regulate Neu5Ac transport. The binding energy of the second Na(+) ion may be used to allosterically stabilize the substrate without directly coordinating it. In the absence of external Na(+), the rate is reduced by 78%. Functionally, symporter that uses the Na(+) gradient as the driving force for the uptake of the sialic acid N-acetylneuraminic acid (Neu5Ac). It allows the use of host-derived Neu5Ac as an energy source by P.mirabilis. Also binds N-glycolylneuraminic acid (Neu5Gc) and ketodeoxynonulosonic acid (KDN). Shows the highest affinity for Neu5Ac and Neu5Gc, which commonly occupy the terminal non-reducing position of mammalian cell surface glycoconjugates. This Proteus mirabilis (strain HI4320) protein is Sodium/sialic acid symporter SiaT.